Reading from the N-terminus, the 872-residue chain is Leucine-rich repeat-containing protein 66 (872 aa).

The chain crosses the membrane as a helical span at residues 4–24 (FYVRVTILVTGLCFVETVTTP). N45 and N108 each carry an N-linked (GlcNAc...) asparagine glycan. LRR repeat units lie at residues 142–164 (RLQV…WKLK), 165–186 (SLRS…DFHG), 189–210 (QLES…AFKG), 213–234 (KLQV…VTIA), and 239–259 (HLEL…VNFQ). A disordered region spans residues 339 to 363 (LRGMWPQSPVELRDSQDEQVTDRKD). Basic and acidic residues predominate over residues 349-363 (ELRDSQDEQVTDRKD). Residues 371–391 (LAICLSVFITFVVAFCLGAFA) traverse the membrane as a helical segment. Polar residues predominate over residues 467–483 (QMLGSNGTDPGHQQSPE). 4 disordered regions span residues 467–501 (QMLG…VLPS), 560–579 (GTFP…SQPR), 695–761 (NYES…SQRI), and 776–872 (LISG…SKHW). N472 carries N-linked (GlcNAc...) asparagine glycosylation. The span at 484–493 (QLKDSNESRS) shows a compositional bias: basic and acidic residues. S718 carries the phosphoserine modification. 3 stretches are compositionally biased toward polar residues: residues 725–736 (SVENDGTSQPLP), 746–760 (SVTS…TSQR), and 785–805 (CETN…STWP). Position 752 is a phosphoserine (S752). Residues 831–841 (VDWHYSLRDLE) show a composition bias toward basic and acidic residues.

It is found in the membrane. This chain is Leucine-rich repeat-containing protein 66 (Lrrc66), found in Mus musculus (Mouse).